Consider the following 297-residue polypeptide: Protease HtpX homolog (297 aa).

2 helical membrane passes run 14–34 (VILL…AGYL) and 39–59 (YQLG…SMIF). His143 is a Zn(2+) binding site. Residue Glu144 is part of the active site. His147 contributes to the Zn(2+) binding site. Transmembrane regions (helical) follow at residues 158 to 178 (IAVA…RMMW) and 193 to 213 (GFGA…PLAA). A Zn(2+)-binding site is contributed by Glu225.

It belongs to the peptidase M48B family. Zn(2+) serves as cofactor.

It localises to the cell membrane. This chain is Protease HtpX homolog, found in Streptococcus equi subsp. equi (strain 4047).